Consider the following 319-residue polypeptide: Inositol phosphoceramide mannosyltransferase 1 (319 aa).

Residues 8–28 (LLLKGIPICGVILLILWGYSL) traverse the membrane as a helical segment. N-linked (GlcNAc...) asparagine glycans are attached at residues N115 and N198. The next 2 helical transmembrane spans lie at 211 to 231 (PTVF…KYLL) and 279 to 299 (VLFF…RVVF).

This sequence belongs to the glycosyltransferase 32 family.

The protein localises to the golgi apparatus. The protein resides in the cis-Golgi network membrane. It is found in the trans-Golgi network membrane. With imt2 and imt3, is required for the synthesis of mannosyl phosphorylinositol ceramide (MIPC). Catalyzes the addition of mannosyl to phosphorylinositol ceramide (IPC). MIPC is essential for cell morphology, cell-surface distribution of ergosterol, localization for plasma-membrane transporters, and lipid-raft-mediated endocytosis of plasma membrane proteins to the vacuole. This Schizosaccharomyces pombe (strain 972 / ATCC 24843) (Fission yeast) protein is Inositol phosphoceramide mannosyltransferase 1 (imt1).